Here is a 571-residue protein sequence, read N- to C-terminus: Optineurin (571 aa).

Disordered regions lie at residues 1 to 32 (MSHQ…HPNL) and 100 to 144 (LSHE…DQLR). The stretch at 38 to 170 (EELLQQMKEL…VSELQLKLNS (133 aa)) forms a coiled coil. The interaction with Rab8 stretch occupies residues 58 to 209 (MKLNNQAMKG…GPTRTVSIGT (152 aa)). Over residues 100 to 143 (LSHENEKLKEELGKLKGKSERSSEDPTDDSRLPRAEAEQEKDQL) the composition is skewed to basic and acidic residues. The LIR motif lies at 176-181 (DSFVEI). A Phosphoserine; by TBK1 modification is found at Ser-177. Over residues 186–197 (GEAEGSVKEIKH) the composition is skewed to basic and acidic residues. Disordered stretches follow at residues 186-210 (GEAE…IGTS) and 255-291 (VSDF…TVGS). Ser-198 carries the phosphoserine modification. Over residues 201-210 (PTRTVSIGTS) the composition is skewed to polar residues. Residues 233 to 502 (CLREGNQKVE…LLKENDAFED (270 aa)) adopt a coiled-coil conformation. Basic and acidic residues-rich tracts occupy residues 255-268 (VSDF…RSEI) and 275-286 (STEKENEEEKGP). Ser-336 carries the post-translational modification Phosphoserine. The tract at residues 405-571 (TRKESEKVDR…LQIHVMDCII (167 aa)) is interaction with HD. The tract at residues 406 to 514 (RKESEKVDRA…RQSLMEMQSR (109 aa)) is interaction with MYO6. Positions 468-473 (DFHAER) match the UBAN motif. Position 520 is a phosphoserine (Ser-520). The segment at 541–571 (QRNIPIHSCPKCGEVLPDIDTLQIHVMDCII) adopts a CCHC NOA-type zinc-finger fold. Zn(2+) is bound by residues Cys-549, Cys-552, His-565, and Cys-569.

In terms of assembly, self-associates. Interacts with HD. Interacts with GTF3A. Interacts with MYO6. Interacts (via UBAN) with ubiquitinated TFRC. Interacts with GTP-bound Rab8 (RAB8A and/or RAB8B). Interacts with TBC1D17. Interacts with TBK1. Interacts with TRAF3. Binds to linear ubiquitin chains. Interacts with LC3 family members MAP1LC3A, MAP1LC3B, GABARAP, GABARAPL1 and GABARAPL2; OPTN phosphorylation increases the association (at least with MAP1LC3B). Interacts with RAB12; the interaction may be indirect. Interacts with TBK1; this interaction leads to the Golgi localization of TBK1 and its subsequent activation. Interacts with palmitoyltransferase ZDHHC17/HIP14; the interaction does not lead to palmitoylation of OPTN. Interacts with CYLD. Interacts with TOM1; the interaction is indirect and is mediated by MYO6, which acts as a bridge between TOM1 and OPTN. Interacts with USP12; the interaction is independent of USP12 deubiquitinase activity and may be involved in regulation of autophagic flux. Post-translationally, phosphorylated by TBK1, leading to restrict bacterial proliferation in case of infection. As to expression, present in aqueous humor of the eye (at protein level).

The protein resides in the cytoplasm. Its subcellular location is the perinuclear region. The protein localises to the golgi apparatus. It localises to the trans-Golgi network. It is found in the cytoplasmic vesicle. The protein resides in the autophagosome. Its subcellular location is the recycling endosome. Functionally, plays an important role in the maintenance of the Golgi complex, in membrane trafficking, in exocytosis, through its interaction with myosin VI and Rab8. Links myosin VI to the Golgi complex and plays an important role in Golgi ribbon formation. Negatively regulates the induction of IFNB in response to RNA virus infection. Plays a neuroprotective role in the eye and optic nerve. Probably part of the TNF-alpha signaling pathway that can shift the equilibrium toward induction of cell death. May act by regulating membrane trafficking and cellular morphogenesis via a complex that contains Rab8 and huntingtin (HD). Mediates the interaction of Rab8 with the probable GTPase-activating protein TBC1D17 during Rab8-mediated endocytic trafficking, such as that of transferrin receptor (TFRC/TfR); regulates Rab8 recruitment to tubules emanating from the endocytic recycling compartment. Autophagy receptor that interacts directly with both the cargo to become degraded and an autophagy modifier of the MAP1 LC3 family; targets ubiquitin-coated bacteria (xenophagy) and appears to function in the same pathway as SQSTM1 and CALCOCO2/NDP52. The sequence is that of Optineurin (OPTN) from Macaca mulatta (Rhesus macaque).